We begin with the raw amino-acid sequence, 113 residues long: uncharacterized protein (113 aa).

Helical transmembrane passes span 9–31 (IFPSLPIIVFIVFVEVPVLSVIY), 36–58 (VLTIYPLLISLIFSLAVFAYKFQ), and 71–90 (IMALFVIFWLLSQITMVVAV).

Its subcellular location is the cell membrane. This is an uncharacterized protein from Archaeoglobus fulgidus (strain ATCC 49558 / DSM 4304 / JCM 9628 / NBRC 100126 / VC-16).